We begin with the raw amino-acid sequence, 149 residues long: MRAVVQRVSRGEVSVGGEMVSSIGKGFVVLVGISIDDNENDVMYMADKIVNLRVFEDEEGKMNLSLLDIGGEVLLVSQFTLLGDVRKGRRPNFMMAQKPQEALKYFNLLVKEIEKRGVSVKTGIFQAMMKVLIENDGPVTILIDSKKVF.

The short motif at 137-138 (GP) is the Gly-cisPro motif, important for rejection of L-amino acids element.

It belongs to the DTD family. Homodimer.

The protein resides in the cytoplasm. It catalyses the reaction glycyl-tRNA(Ala) + H2O = tRNA(Ala) + glycine + H(+). The enzyme catalyses a D-aminoacyl-tRNA + H2O = a tRNA + a D-alpha-amino acid + H(+). An aminoacyl-tRNA editing enzyme that deacylates mischarged D-aminoacyl-tRNAs. Also deacylates mischarged glycyl-tRNA(Ala), protecting cells against glycine mischarging by AlaRS. Acts via tRNA-based rather than protein-based catalysis; rejects L-amino acids rather than detecting D-amino acids in the active site. By recycling D-aminoacyl-tRNA to D-amino acids and free tRNA molecules, this enzyme counteracts the toxicity associated with the formation of D-aminoacyl-tRNA entities in vivo and helps enforce protein L-homochirality. This is D-aminoacyl-tRNA deacylase from Thermoanaerobacter pseudethanolicus (strain ATCC 33223 / 39E) (Clostridium thermohydrosulfuricum).